Consider the following 152-residue polypeptide: MSTPARRRLMRDFKRLQEDPPAGVSGAPSENNIMVWNAVIFGPEGTPFEDGTFKLTIEFTEEYPNKPPTVRFVSKMFHPNVYADGSICLDILQNRWSPTYDVSSILTSIQSLLDEPNPNSPANSQAAQLYQENKREYEKRVSAIVEQSWRDC.

Residues 4–150 (PARRRLMRDF…VSAIVEQSWR (147 aa)) form the UBC core domain. C88 functions as the Glycyl thioester intermediate in the catalytic mechanism. S120 is subject to Phosphoserine; by CDK9.

It belongs to the ubiquitin-conjugating enzyme family. Interacts with RAD18 and WAC. Interacts with RFPL4A and CCNB1. Post-translationally, phosphorylation at Ser-120 by CDK9 increases activity towards histone H2B.

The protein resides in the late endosome. Its subcellular location is the lysosome. The catalysed reaction is S-ubiquitinyl-[E1 ubiquitin-activating enzyme]-L-cysteine + [E2 ubiquitin-conjugating enzyme]-L-cysteine = [E1 ubiquitin-activating enzyme]-L-cysteine + S-ubiquitinyl-[E2 ubiquitin-conjugating enzyme]-L-cysteine.. It functions in the pathway protein modification; protein ubiquitination. Functionally, E2 ubiquitin-conjugating enzyme that accepts ubiquitin from the ubiquitin-activating enzyme E1 and transfers it to a E3 ubiquitin-protein ligase. In vitro catalyzes 'Lys-11', as well as 'Lys-48'-linked polyubiquitination. Together with the E3 enzyme BRE1 (RNF20 and/or RNF40), plays a role in transcription regulation by catalyzing the monoubiquitination of histone H2B at 'Lys-120' to form H2BK120ub1. H2BK120ub1 gives a specific tag for epigenetic transcriptional activation, elongation by RNA polymerase II, telomeric silencing, and is also a prerequisite for H3K4me and H3K79me formation. Involved in mitophagy by acting as a E2 ubiquitin-conjugating enzyme for PRKN. In association with the E3 enzyme UBR4, is involved in N-end rule-dependent protein degradation. In association with the E3 ubiquitin-protein ligase complex SIFI, inhibits the mitochondrial stress response by acting as a E2 ubiquitin-conjugating enzyme for UBR4 and KCMF1. This is Ubiquitin-conjugating enzyme E2 A from Homo sapiens (Human).